The following is a 105-amino-acid chain: MHFIALIVAVCVAFAGASCPYSSGGIAAPPCPKNYLFSCQPNLVPAPCAQEAASYGSAGAYAEHIPFYVGYPNHQQVEQYQERIARAALIDGLRGLTQGIQDQQY.

The signal sequence occupies residues 1–17 (MHFIALIVAVCVAFAGA). The VM domain occupies 25-62 (GIAAPPCPKNYLFSCQPNLVPAPCAQEAASYGSAGAYA).

This sequence belongs to the vitelline membrane family.

It is found in the secreted. Functionally, major early eggshell protein. This Drosophila ananassae (Fruit fly) protein is Vitelline membrane protein Vm32E.